The chain runs to 440 residues: COP9 signalosome complex subunit 5 (440 aa).

In terms of domain architecture, MPN spans 71 to 218 (VLISKLSCEK…MGAFRTIESK (148 aa)). Residues histidine 164, histidine 166, and aspartate 177 each coordinate Zn(2+). Positions 164–177 (HSHPGYDCWLSNID) match the JAMM motif motif. Over residues 319 to 341 (TQRGDSTETSSFGSMFSGDNTSD) the composition is skewed to polar residues. Disordered stretches follow at residues 319 to 343 (TQRG…SDVD) and 376 to 400 (SRST…HDEG).

The protein belongs to the peptidase M67A family. CSN5 subfamily. In terms of assembly, component of a COP9 signalosome-like (CSN) complex, composed of at least RRI1/CSN5, CSN9, RRI2/CSN10, PCI8/CSN11, CSN12 and CSI1. Within this complex it probably interacts directly with CSN12. Also interacts with RPN5. A divalent metal cation is required as a cofactor.

The protein localises to the cytoplasm. The protein resides in the nucleus. Catalytic component of the COP9 signalosome (CSN) complex that acts as an regulator of the ubiquitin (Ubl) conjugation pathway by mediating the deneddylation of the cullin subunit of SCF-type E3 ubiquitin-protein ligase complexes. The CSN complex is involved in the regulation of the mating pheromone response. The polypeptide is COP9 signalosome complex subunit 5 (RRI1) (Saccharomyces cerevisiae (strain YJM789) (Baker's yeast)).